The chain runs to 322 residues: uncharacterized protein (322 aa).

Positions 1 to 13 are enriched in polar residues; that stretch reads MTNADEQNMGQQE. Disordered regions lie at residues 1–94 and 125–322; these read MTNA…EEYE and RREM…TDEE. The span at 14–31 shows a compositional bias: low complexity; that stretch reads GTDTATTAQDTNTQTVGT. Positions 32–50 are enriched in polar residues; it reads QSENTQNTQQASDAQTEQT. Positions 64-75 are enriched in acidic residues; that stretch reads EVDEDDVLDAQE. Composition is skewed to basic and acidic residues over residues 141–227, 235–269, 277–295, and 308–322; these read GGDR…RGGD, RPRE…RGGD, RPRE…RTDD, and ARAD…TDEE.

This is an uncharacterized protein from Deinococcus radiodurans (strain ATCC 13939 / DSM 20539 / JCM 16871 / CCUG 27074 / LMG 4051 / NBRC 15346 / NCIMB 9279 / VKM B-1422 / R1).